Here is a 455-residue protein sequence, read N- to C-terminus: MAQFFQAKPNKSKQLSAKLSLSVTQLDHLGAGIAQHQGKIVFIPGVLPGETATVQFVEQKKSYAKAKLISIESASVNRIKPHCPHYQQCGGCDLQHMDTNAQREHKQTALVDLISKLSSAKAIDADIVADPIVGEAWHYRRRARLATLFDKNTQRLQLGFRAGNSNKIVSIQQCPVLSESLSALITPLAANLNQLKAKASLGHVELTQADNGNFAVLRVTKVLPASDIRWLTGFAEKHQLNLLLQDDAGQLTQLFPLLPAGDEAIALPYYHLAQEAVRCSFTPGNFVQVNGAINQAMVDQAIEWLDPQSGERILDLFCGVGNFSLPLALKAAEVIGVEGVPEMVQQAKQNAIDNQLDNVTFYHADLSADLSTQTWLGKIDKLLLDPARAGAFESLQWLQKMQPKKVVYVSCNPASLARDSSVLLASGYRIAQVGLVDMFPQTHHIEAMVLFELNI.

Positions 12 to 70 (SKQLSAKLSLSVTQLDHLGAGIAQHQGKIVFIPGVLPGETATVQFVEQKKSYAKAKLIS) constitute a TRAM domain. [4Fe-4S] cluster-binding residues include cysteine 83, cysteine 89, cysteine 92, and cysteine 174. S-adenosyl-L-methionine contacts are provided by glutamine 288, phenylalanine 317, asparagine 322, glutamate 338, aspartate 365, and aspartate 385. Cysteine 411 (nucleophile) is an active-site residue.

Belongs to the class I-like SAM-binding methyltransferase superfamily. RNA M5U methyltransferase family. RlmD subfamily.

The catalysed reaction is uridine(1939) in 23S rRNA + S-adenosyl-L-methionine = 5-methyluridine(1939) in 23S rRNA + S-adenosyl-L-homocysteine + H(+). Catalyzes the formation of 5-methyl-uridine at position 1939 (m5U1939) in 23S rRNA. The sequence is that of 23S rRNA (uracil(1939)-C(5))-methyltransferase RlmD from Shewanella frigidimarina (strain NCIMB 400).